Here is a 462-residue protein sequence, read N- to C-terminus: Argininosuccinate lyase (462 aa).

This sequence belongs to the lyase 1 family. Argininosuccinate lyase subfamily.

It localises to the cytoplasm. It catalyses the reaction 2-(N(omega)-L-arginino)succinate = fumarate + L-arginine. It functions in the pathway amino-acid biosynthesis; L-arginine biosynthesis; L-arginine from L-ornithine and carbamoyl phosphate: step 3/3. This Bacillus cereus (strain B4264) protein is Argininosuccinate lyase.